Consider the following 145-residue polypeptide: Lymphocyte antigen 6 complex locus protein G5c (145 aa).

A signal peptide spans 1 to 38 (MSGLAASWSLKPLGPHGVTQALCAVLLAVLVTMNVVLG). In terms of domain architecture, UPAR/Ly6 spans 55–145 (LHCYRCLLET…NPKNRKNTMH (91 aa)). 5 disulfide bridges follow: Cys-57-Cys-84, Cys-60-Cys-69, Cys-76-Cys-102, Cys-111-Cys-128, and Cys-129-Cys-134. N-linked (GlcNAc...) asparagine glycosylation occurs at Asn-91.

In terms of assembly, forms oligomers. Post-translationally, N-glycosylated. As to expression, expression restricted to the caput of epididymis. Detected only from day 24 postnatum.

It localises to the secreted. May have a role in hematopoietic cell differentiation. This is Lymphocyte antigen 6 complex locus protein G5c (Ly6g5c) from Rattus norvegicus (Rat).